Consider the following 370-residue polypeptide: DNA replication and repair protein RecF (370 aa).

An ATP-binding site is contributed by 30 to 37; sequence GENAQGKT.

The protein belongs to the RecF family.

The protein localises to the cytoplasm. In terms of biological role, the RecF protein is involved in DNA metabolism; it is required for DNA replication and normal SOS inducibility. RecF binds preferentially to single-stranded, linear DNA. It also seems to bind ATP. This Staphylococcus carnosus (strain TM300) protein is DNA replication and repair protein RecF.